Consider the following 623-residue polypeptide: MCNDTATPQLEELVTTVANQLMTVDAATSAEVSQRVLAYLVEQLGVDVSFLRHNDRDRRATRLVAEWPPRLNIPDPDPLRLIYFADADPVFALCEHAKEPLVFRPEPATEDYQRLIEEARGVPVTSAAAVPLVSGEITTGLLGFIKFGDRKWHEAELNALMTIATLFAQVQARVAAEARLRYLADHDDLTGLHNRRALLQHLDQRLAPGQPGPVAALFLDLDRLKAINDYLGHAAGDQFIHVFAQRIGDALVGESLIARLGGDEFVLIPASPMSADAAQPLAERLRDQLKDHVAIGGEVLTRTVSIGVASGTPGQHTPSDLLRRADQAALAAKHAGGDSVAIFTADMSVSGELRNDIELHLRRGIESDALRLVYLPEVDLRTGDIVGTEALVRWQHPTRGLLAPGCFIPVAESINLAGELDRWVLRRACNEFSEWQSAGLGHDALLRINVSAGQLVTGGFVDFVADTIGQHGLDASSVCLEITENVVVQDLHTARATLARLKEVGVHIAIDDFGTGYSAISLLQTLPIDTLKIDKTFVRQLGTNTSDLVIVRGIMTLAEGFQLDVVAEGVETEAAARILLDQRCYRAQGFLFSRPVPGEAMRHMLSARRLPPTCIPATDPALS.

The region spanning 28–171 is the GAF domain; that stretch reads TSAEVSQRVL…TIATLFAQVQ (144 aa). The GGDEF domain occupies 212 to 345; the sequence is GPVAALFLDL…GGDSVAIFTA (134 aa). An EAL domain is found at 354 to 609; the sequence is RNDIELHLRR…AMRHMLSARR (256 aa).

This is an uncharacterized protein from Mycobacterium tuberculosis (strain CDC 1551 / Oshkosh).